A 241-amino-acid polypeptide reads, in one-letter code: MSESSNTNLEQAKQEGKYIRTIRSFVKREGRLTKGQAAAIEKCWPIMGLEHKNGMLDLSEVFGNNNDVVLEIGFGMGKSLVEMAKNAPHLNFIGIEVHRPGVGACLMDADEAGITNLRIFEHDAVEVLADCIADESLTTLQLFFPDPWHKKRHHKRRIVQGEFVEKLRSQLKMGGVFHMATDWENYAEHMLEVMQAAPGFKNQSTTNDYVPRPDLRPLTKFEQRGHRLGHGVWDLMFERTK.

Residues glutamate 71, glutamate 96, aspartate 123, and aspartate 146 each coordinate S-adenosyl-L-methionine. The active site involves aspartate 146. Substrate-binding positions include lysine 150, aspartate 182, and 219 to 222; that span reads TKFE.

It belongs to the class I-like SAM-binding methyltransferase superfamily. TrmB family.

It carries out the reaction guanosine(46) in tRNA + S-adenosyl-L-methionine = N(7)-methylguanosine(46) in tRNA + S-adenosyl-L-homocysteine. Its pathway is tRNA modification; N(7)-methylguanine-tRNA biosynthesis. Its function is as follows. Catalyzes the formation of N(7)-methylguanine at position 46 (m7G46) in tRNA. The sequence is that of tRNA (guanine-N(7)-)-methyltransferase from Pseudoalteromonas translucida (strain TAC 125).